Reading from the N-terminus, the 125-residue chain is MRHYEIVFMVHPDQSEQVPGMIERYTSSIKEAGGQIHRLEDWGRRQLAYPINKLHKAHYVLMNVEAPQEVIDELETTFRYNDAVLRNVIIRTKHAVTEASPMVKAREERKPLTEVENNDFEDAEE.

The disordered stretch occupies residues 100-125 (SPMVKAREERKPLTEVENNDFEDAEE). Basic and acidic residues predominate over residues 104-113 (KAREERKPLT). The span at 116–125 (ENNDFEDAEE) shows a compositional bias: acidic residues.

This sequence belongs to the bacterial ribosomal protein bS6 family.

Functionally, binds together with bS18 to 16S ribosomal RNA. The protein is Small ribosomal subunit protein bS6 of Histophilus somni (strain 129Pt) (Haemophilus somnus).